The following is a 226-amino-acid chain: Orotidine 5'-phosphate decarboxylase (226 aa).

Substrate contacts are provided by residues D8, K30, 58-67, T117, R177, Q186, G206, and R207; that span reads DLKLYDIPNT. K60 acts as the Proton donor in catalysis.

It belongs to the OMP decarboxylase family. Type 1 subfamily. In terms of assembly, homodimer.

It carries out the reaction orotidine 5'-phosphate + H(+) = UMP + CO2. It functions in the pathway pyrimidine metabolism; UMP biosynthesis via de novo pathway; UMP from orotate: step 2/2. In terms of biological role, catalyzes the decarboxylation of orotidine 5'-monophosphate (OMP) to uridine 5'-monophosphate (UMP). The polypeptide is Orotidine 5'-phosphate decarboxylase (Campylobacter concisus (strain 13826)).